Here is a 280-residue protein sequence, read N- to C-terminus: MSLIREIAGGPYALAAGPDGAMWVTLVHDGAIARVGADGAVDRFPVADGSRPSLISAGPDGALWFTRNGDDRIGRLTTAGELTEFPLSEGSAPFGICAGADGALWFTEMGSGGIGRITVDGQTSGWASVGGTPSMITRGPDDAVWFTLNQGNAIGRLHPRDGVTMRELPTRGAGPVGITATHDDAIWFTEILADKLGRIPLDGALQEIDLPGKPHAVVADPSGGVWVSLWGADRLARVSADGDIETFDLPPGSEPHGLAFGPDGGLWVALESGFVLRMPD.

Residue H215 participates in substrate binding. A Mg(2+)-binding site is contributed by E254. H256 (proton acceptor) is an active-site residue. A Mg(2+)-binding site is contributed by E271.

Belongs to the Vgb family. In terms of assembly, monomer. The cofactor is Mg(2+).

Its function is as follows. Inactivates the type B streptogramin antibiotics by linearizing the lactone ring at the ester linkage, generating a free phenylglycine carboxylate and converting the threonyl moiety into 2-amino-butenoic acid. This is Virginiamycin B lyase from Mycobacterium sp. (strain KMS).